The chain runs to 144 residues: Flagellar assembly factor FliW (144 aa).

This sequence belongs to the FliW family. In terms of assembly, monomer. One copy interacts with the each alpha-helical wing of the CsrA homodimer, yielding a FliW-CsrA(2)-FliW complex. Comparison with a CsrA-mRNA structure (2JPP) suggests CsrA cannot bind both mRNA and FliW at the same time. Interacts with flagellin.

Its subcellular location is the cytoplasm. Its function is as follows. Acts as an anti-CsrA protein, binds CsrA and prevents it from repressing translation of its target genes, one of which is flagellin. Binds to flagellin and participates in the assembly of the flagellum. In terms of biological role, allosterically inhibits CsrA binding to mRNA in a non-competitive fashion by preventing CsrA binding to the 5'-UTR. In Geobacillus thermodenitrificans (strain NG80-2), this protein is Flagellar assembly factor FliW.